A 624-amino-acid polypeptide reads, in one-letter code: tRNA uridine 5-carboxymethylaminomethyl modification enzyme MnmG (624 aa).

Residues 13-18 (GAGHAG), valine 125, and serine 180 each bind FAD. 272 to 286 (GPRYCPSIEDKVVKF) is an NAD(+) binding site. Glutamine 369 contacts FAD.

It belongs to the MnmG family. Homodimer. Heterotetramer of two MnmE and two MnmG subunits. FAD is required as a cofactor.

It is found in the cytoplasm. NAD-binding protein involved in the addition of a carboxymethylaminomethyl (cmnm) group at the wobble position (U34) of certain tRNAs, forming tRNA-cmnm(5)s(2)U34. The protein is tRNA uridine 5-carboxymethylaminomethyl modification enzyme MnmG of Thermodesulfovibrio yellowstonii (strain ATCC 51303 / DSM 11347 / YP87).